The primary structure comprises 346 residues: Hydroxymethylglutaryl-CoA synthase (346 aa).

Asp28 serves as a coordination point for (3S)-3-hydroxy-3-methylglutaryl-CoA. Glu80 (proton donor/acceptor) is an active-site residue. Positions 112 and 153 each coordinate (3S)-3-hydroxy-3-methylglutaryl-CoA. Cys112 acts as the Acyl-thioester intermediate in catalysis. Arg199 provides a ligand contact to CoA. (3S)-3-hydroxy-3-methylglutaryl-CoA contacts are provided by Thr201 and His234. His234 acts as the Proton donor/acceptor in catalysis. Position 239 (Lys239) interacts with CoA. Arg243, Asn266, and Ser296 together coordinate (3S)-3-hydroxy-3-methylglutaryl-CoA.

The protein belongs to the thiolase-like superfamily. Archaeal HMG-CoA synthase family. In terms of assembly, interacts with acetoacetyl-CoA thiolase that catalyzes the precedent step in the pathway and with a DUF35 protein. The acetoacetyl-CoA thiolase/HMG-CoA synthase complex channels the intermediate via a fused CoA-binding site, which allows for efficient coupling of the endergonic thiolase reaction with the exergonic HMGCS reaction.

The enzyme catalyses acetoacetyl-CoA + acetyl-CoA + H2O = (3S)-3-hydroxy-3-methylglutaryl-CoA + CoA + H(+). It functions in the pathway metabolic intermediate biosynthesis; (R)-mevalonate biosynthesis; (R)-mevalonate from acetyl-CoA: step 2/3. In terms of biological role, catalyzes the condensation of acetyl-CoA with acetoacetyl-CoA to form 3-hydroxy-3-methylglutaryl-CoA (HMG-CoA). Functions in the mevalonate (MVA) pathway leading to isopentenyl diphosphate (IPP), a key precursor for the biosynthesis of isoprenoid compounds that are building blocks of archaeal membrane lipids. This is Hydroxymethylglutaryl-CoA synthase from Methanosphaera stadtmanae (strain ATCC 43021 / DSM 3091 / JCM 11832 / MCB-3).